We begin with the raw amino-acid sequence, 562 residues long: Potassium-transporting ATPase potassium-binding subunit (562 aa).

The next 12 membrane-spanning stretches (helical) occupy residues 6 to 26, 62 to 82, 132 to 152, 175 to 195, 253 to 273, 283 to 303, 327 to 347, 356 to 376, 379 to 399, 416 to 436, 483 to 503, and 526 to 546; these read FLLIASFMVVLFVLSRPLGGF, YALAILCFNLLGIVLLFVLLM, GLTVQNFLSAATGIAVAFALI, LYVLLPIALIIALIFVSQGVL, FVQMLAIFLIPCALCFAFGQV, LIWAMSLIFIVAVVVVMYAEL, FGILATSLYAVVTTAASCGAV, ALGGMIPLWLMQIGEVVFGGV, GLYGMLLFVLLTVFIAGLMIG, MTALAILVTPTIVLLGTALAL, LLLAAAMFIGRFGVILPVLAI, and LFIGLLIGTVLLVGALTFIPA.

This sequence belongs to the KdpA family. In terms of assembly, the system is composed of three essential subunits: KdpA, KdpB and KdpC.

The protein resides in the cell inner membrane. In terms of biological role, part of the high-affinity ATP-driven potassium transport (or Kdp) system, which catalyzes the hydrolysis of ATP coupled with the electrogenic transport of potassium into the cytoplasm. This subunit binds the periplasmic potassium ions and delivers the ions to the membrane domain of KdpB through an intramembrane tunnel. The polypeptide is Potassium-transporting ATPase potassium-binding subunit (Yersinia pseudotuberculosis serotype IB (strain PB1/+)).